Reading from the N-terminus, the 233-residue chain is MAAAAVDPMVLGLGTSGGASGSGVVGGGVGRAGGGGAVMEGAQPVDLARHPSGIVPVLQNIVSTVNLDCRLDLKQIALQARNAEYNPKRFAAVIMRIRDPKTTALIFASGKMVCTGAKSEEHSKLAARKYARIVQKLGFPATFKDFKIQNIVASCDVKFPIRLEGLAYSHGAFSSYEPELFPGLIYRMKQPKIVLLVFVSGKIVLTGAKVRDEIYAAFENIYPVLTEYRKSQQ.

2 tandem repeats follow at residues 58 to 134 (LQNI…ARIV) and 148 to 225 (IQNI…YPVL).

This sequence belongs to the TBP family. As to quaternary structure, belongs to the TFIID complex together with the TBP-associated factors (TAFs). Binds DNA as monomer.

It localises to the nucleus. In terms of biological role, general transcription factor that functions at the core of the DNA-binding multiprotein factor TFIID. Binding of TFIID to the TATA box is the initial transcriptional step of the pre-initiation complex (PIC), playing a role in the activation of eukaryotic genes transcribed by RNA polymerase II. This is TATA-box-binding protein 1 (TBP1) from Triticum aestivum (Wheat).